Consider the following 586-residue polypeptide: Arginine--tRNA ligase (586 aa).

Residues 127 to 137 carry the 'HIGH' region motif; sequence PNVAKEMHVGH.

It belongs to the class-I aminoacyl-tRNA synthetase family. As to quaternary structure, monomer.

The protein resides in the cytoplasm. The enzyme catalyses tRNA(Arg) + L-arginine + ATP = L-arginyl-tRNA(Arg) + AMP + diphosphate. In Streptomyces coelicolor (strain ATCC BAA-471 / A3(2) / M145), this protein is Arginine--tRNA ligase (argS).